A 1100-amino-acid polypeptide reads, in one-letter code: Formin-like protein 1 (1100 aa).

Over residues 1–13 (MGNAAGSAEQPAG) the composition is skewed to low complexity. Disordered stretches follow at residues 1 to 31 (MGNAAGSAEQPAGPAAPPPKQPAPPKQPMPA), 167 to 200 (STDNGASNSEKNKPLEQSVEDLSKGPPSSVPKSR), 446 to 474 (RFSESTAMGPSRRPPEPEKAPPAAPTRPS), and 510 to 635 (TPSG…AKKP). Gly2 carries the N-myristoyl glycine lipid modification. Ser7 carries the post-translational modification Phosphoserine. Residues 14–28 (PAAPPPKQPAPPKQP) show a composition bias toward pro residues. The region spanning 27 to 468 (QPMPAAGELE…PPEPEKAPPA (442 aa)) is the GBD/FH3 domain. Ser184 carries the post-translational modification Phosphoserine. Low complexity predominate over residues 517 to 538 (PTPGVPTGSPSPDLAPAAEPAP). The span at 539 to 615 (GAAPPPPPPL…PPPPPPPGGP (77 aa)) shows a compositional bias: pro residues. Ser624 and Ser693 each carry phosphoserine. The region spanning 632 to 1023 (AKKPIQTKFR…QEAGADTPGK (392 aa)) is the FH2 domain. The interval 1008–1037 (KKEAAAQEAGADTPGKGEPPAPKSPPKARR) is disordered. Over residues 1013–1023 (AQEAGADTPGK) the composition is skewed to low complexity. Ser1031 carries the phosphoserine modification. Positions 1059–1090 (SDRDGAIEDIITVIKTVPFTARTGKRTSRLLC) constitute a DAD domain.

Belongs to the formin homology family. Interacts with RAC1, PFN1 and PFN2. Interacts (activated by RAC1) with SRGAP2 (via SH3 domain); regulates the actin filament severing activity of FMNL1. Post-translationally, myristoylation mediates membrane localization and blebbing. As to expression, expressed in heart, brain, placenta, lung, liver, skeletal muscle, kidney and pancreas.

Its subcellular location is the cytoplasm. It is found in the cell membrane. It localises to the cytoplasmic vesicle. The protein localises to the phagosome. The protein resides in the cell cortex. Its subcellular location is the cell projection. It is found in the bleb. Functionally, may play a role in the control of cell motility and survival of macrophages. Plays a role in the regulation of cell morphology and cytoskeletal organization. Required in the cortical actin filament dynamics and cell shape. The sequence is that of Formin-like protein 1 (FMNL1) from Homo sapiens (Human).